A 349-amino-acid polypeptide reads, in one-letter code: Selenide, water dikinase (349 aa).

Residue selenocysteine 19 is part of the active site. A non-standard amino acid (selenocysteine) is located at residue selenocysteine 19. ATP contacts are provided by residues lysine 22 and 50 to 52 (LGD). A Mg(2+)-binding site is contributed by aspartate 53. ATP-binding positions include aspartate 69, aspartate 92, and 140-142 (GHT). Position 92 (aspartate 92) interacts with Mg(2+). Aspartate 246 provides a ligand contact to Mg(2+).

It belongs to the selenophosphate synthase 1 family. Class I subfamily. In terms of assembly, homodimer. The cofactor is Mg(2+).

It catalyses the reaction hydrogenselenide + ATP + H2O = selenophosphate + AMP + phosphate + 2 H(+). In terms of biological role, synthesizes selenophosphate from selenide and ATP. The chain is Selenide, water dikinase from Methanocaldococcus jannaschii (strain ATCC 43067 / DSM 2661 / JAL-1 / JCM 10045 / NBRC 100440) (Methanococcus jannaschii).